Consider the following 87-residue polypeptide: Putative regulatory protein ABC2323 (87 aa).

Belongs to the RemA family.

This is Putative regulatory protein ABC2323 from Shouchella clausii (strain KSM-K16) (Alkalihalobacillus clausii).